A 369-amino-acid polypeptide reads, in one-letter code: UDP-N-acetylglucosamine--N-acetylmuramyl-(pentapeptide) pyrophosphoryl-undecaprenol N-acetylglucosamine transferase (369 aa).

Residues 15–17, Asn-126, Arg-169, Ser-197, and Gln-299 contribute to the UDP-N-acetyl-alpha-D-glucosamine site; that span reads TGG.

It belongs to the glycosyltransferase 28 family. MurG subfamily.

Its subcellular location is the cell inner membrane. It catalyses the reaction di-trans,octa-cis-undecaprenyl diphospho-N-acetyl-alpha-D-muramoyl-L-alanyl-D-glutamyl-meso-2,6-diaminopimeloyl-D-alanyl-D-alanine + UDP-N-acetyl-alpha-D-glucosamine = di-trans,octa-cis-undecaprenyl diphospho-[N-acetyl-alpha-D-glucosaminyl-(1-&gt;4)]-N-acetyl-alpha-D-muramoyl-L-alanyl-D-glutamyl-meso-2,6-diaminopimeloyl-D-alanyl-D-alanine + UDP + H(+). Its pathway is cell wall biogenesis; peptidoglycan biosynthesis. Functionally, cell wall formation. Catalyzes the transfer of a GlcNAc subunit on undecaprenyl-pyrophosphoryl-MurNAc-pentapeptide (lipid intermediate I) to form undecaprenyl-pyrophosphoryl-MurNAc-(pentapeptide)GlcNAc (lipid intermediate II). This chain is UDP-N-acetylglucosamine--N-acetylmuramyl-(pentapeptide) pyrophosphoryl-undecaprenol N-acetylglucosamine transferase, found in Methylorubrum extorquens (strain CM4 / NCIMB 13688) (Methylobacterium extorquens).